A 76-amino-acid chain; its full sequence is Omega/kappa-hexatoxin-Ar1g (76 aa).

An N-terminal signal peptide occupies residues 1 to 22 (MNTATGFIVLLVLATVLGGIEA). Residues 23-35 (GESHMRKDAMGRV) constitute a propeptide that is removed on maturation. 3 disulfide bridges follow: Cys40-Cys55, Cys47-Cys60, and Cys54-Cys74.

The protein belongs to the neurotoxin 08 (Shiva) family. 02 (omega/kappa toxin) subfamily. Expressed by the venom gland.

Its subcellular location is the secreted. Functionally, toxin that may inhibit ion channels. This Atrax robustus (Sydney funnel-web spider) protein is Omega/kappa-hexatoxin-Ar1g.